Consider the following 244-residue polypeptide: Biosynthetic peptidoglycan transglycosylase (244 aa).

Residues 25–45 (LLLLLAIALLYQSWFLLHIIY) form a helical membrane-spanning segment.

This sequence belongs to the glycosyltransferase 51 family.

It is found in the cell inner membrane. It catalyses the reaction [GlcNAc-(1-&gt;4)-Mur2Ac(oyl-L-Ala-gamma-D-Glu-L-Lys-D-Ala-D-Ala)](n)-di-trans,octa-cis-undecaprenyl diphosphate + beta-D-GlcNAc-(1-&gt;4)-Mur2Ac(oyl-L-Ala-gamma-D-Glu-L-Lys-D-Ala-D-Ala)-di-trans,octa-cis-undecaprenyl diphosphate = [GlcNAc-(1-&gt;4)-Mur2Ac(oyl-L-Ala-gamma-D-Glu-L-Lys-D-Ala-D-Ala)](n+1)-di-trans,octa-cis-undecaprenyl diphosphate + di-trans,octa-cis-undecaprenyl diphosphate + H(+). Its pathway is cell wall biogenesis; peptidoglycan biosynthesis. Peptidoglycan polymerase that catalyzes glycan chain elongation from lipid-linked precursors. The sequence is that of Biosynthetic peptidoglycan transglycosylase from Nitrosomonas eutropha (strain DSM 101675 / C91 / Nm57).